The primary structure comprises 366 residues: MQVCIIGAGLSGSILYRLLSEDGFYINIYDHVLVRGCKSMNFIFSNKNEILTVKKVLKTVNINIKDYIIREIKEVNIGGDNYYPNKKIYVINKSKLIEDLVPRTVVTNREFNPVIRRYTTKVIDTGVIVREFNTEAETKFYDLVVDASGCAKVLQLGNVYDKYKNDIKTCQFLIAYENEESPEKFDKFFIDEIKIHKGKPMIGYTWITPIDDGLYHVGCAYYKNDHELWTYLTKYTKKMFGSDYVRVCGCTSKINGNLISESFIGGIYEKRCVAGVGESIGLTTPLGHGNIYAIISAYILSRFIKKYDLNEAVLKYKDYIPKKFAELDKEKKAVRNFNVLRITKLLRDYYNIPAHESMKIILKSLY.

This is an uncharacterized protein from Methanocaldococcus jannaschii (strain ATCC 43067 / DSM 2661 / JAL-1 / JCM 10045 / NBRC 100440) (Methanococcus jannaschii).